Here is a 1553-residue protein sequence, read N- to C-terminus: Sodium channel protein PaFPC1 (1553 aa).

Positions 1–68 (MADNSPLIRE…SAHPDQALEQ (68 aa)) are disordered. Over 1-140 (MADNSPLIRE…RVAISTMVQP (140 aa)) the chain is Cytoplasmic. Residues 34–60 (ENGKTEENKDNSRDKGRGANKDRDGSA) show a composition bias toward basic and acidic residues. The chain crosses the membrane as a helical span at residues 141–159 (IFSYFIMITILIHCIFMIM). Residues 160 to 165 (PATQTT) are Extracellular-facing. The helical transmembrane segment at 166–186 (YILELVFLSIYTIEVVVKVLA) threads the bilayer. Over 187 to 200 (RGFILHPFAYLRDP) the chain is Cytoplasmic. The helical transmembrane segment at 201 to 218 (WNWLDFLVTLIGYITLVV) threads the bilayer. Residues 219-224 (DLGHLY) lie on the Extracellular side of the membrane. Residues 225-241 (ALRAFRVLRSWRTVTIV) traverse the membrane as a helical segment. The Cytoplasmic portion of the chain corresponds to 242–260 (PGWRTIVDALSLSITSLKD). A helical membrane pass occupies residues 261 to 280 (LVLLLLFSLFVFAVLGLQIY). Topologically, residues 281–360 (MGVLTQKCVK…PNYGYTSFDT (80 aa)) are extracellular. Cystine bridges form between C288–C337 and C328–C343. N300, N308, N312, and N330 each carry an N-linked (GlcNAc...) asparagine glycan. The pore-forming intramembrane region spans 361 to 385 (FGWAFLSVFRLVTLDYWEDLYQLAL). Saxitoxin is bound at residue E378. The Extracellular segment spans residues 386–392 (RSAGPWH). The chain crosses the membrane as a helical span at residues 393-413 (ILFFIIVVFYGTFCFLNFILA). The Cytoplasmic portion of the chain corresponds to 414 to 519 (VVVMSYTHMV…GAIGAVVLSP (106 aa)). A helical transmembrane segment spans residues 520 to 538 (FFELFIAVIIVLNITFMAL). Residues 539–549 (DHHDMNIEFER) are Extracellular-facing. Residues 550 to 569 (ILRTGNYIFTSIYIVEAVLK) traverse the membrane as a helical segment. Residues 570 to 583 (IIALSPKFYFKDSW) lie on the Cytoplasmic side of the membrane. Residues 584-603 (NVFDFIIVVFAILELGLEGV) traverse the membrane as a helical segment. Over 604-605 (QG) the chain is Extracellular. The helical transmembrane segment at 606-623 (LSVFRSFRLLRVFRLAKF) threads the bilayer. Over 624 to 639 (WPTLNNFMSVMTKSYG) the chain is Cytoplasmic. A helical transmembrane segment spans residues 640 to 658 (AFVNVMYVMFLLLFIFAII). Residues 659–686 (GMQLFGMNYIDNMERFPDGDLPRWNFTD) lie on the Extracellular side of the membrane. N-linked (GlcNAc...) asparagine glycosylation is present at N683. An intramembrane region (pore-forming) is located at residues 687–707 (FLHSFMIVFRALCGEWIESMW). Positions 701 and 704 each coordinate tetrodotoxin. E704 is a saxitoxin binding site. Topologically, residues 708–719 (DCMLVGDWSCIP) are extracellular. C709 and C717 form a disulfide bridge. Residues 720–740 (FFVAVFFVGNLVILNLLIALL) traverse the membrane as a helical segment. Residues 741–857 (LNNYGSFCTS…VCFLLAKNKY (117 aa)) lie on the Cytoplasmic side of the membrane. The chain crosses the membrane as a helical span at residues 858–875 (FQKFVTAVLVITSVLLAL). Topologically, residues 876–888 (EDIYLPQRPVLVN) are extracellular. The helical transmembrane segment at 889–907 (ITLYVDYVLTAFFVIEMII) threads the bilayer. Topologically, residues 908–921 (MLFAVGFKKYFTSK) are cytoplasmic. The helical transmembrane segment at 922–940 (WYWLDFIVVVAYLLNFVLM) threads the bilayer. Residues 941-945 (CAGIE) lie on the Extracellular side of the membrane. Residues 946 to 964 (ALQTLRLLRVFRLFRPLSK) form a helical membrane-spanning segment. Over 965 to 981 (VNGMQVVTSTLVEAVPH) the chain is Cytoplasmic. A helical transmembrane segment spans residues 982-1001 (IFNVILVGIFFWLVFAIMGV). Topologically, residues 1002–1047 (QLFAGKFYKCVDENSTVLSHEITMDRNDCLHENYTWENSPMNFDHV) are extracellular. Residues C1011 and C1030 are joined by a disulfide bond. A glycan (N-linked (GlcNAc...) asparagine) is linked at N1015. N1028 carries N-linked (GlcNAc...) asparagine; atypical glycosylation. N1034 is a glycosylation site (N-linked (GlcNAc...) asparagine). Residues 1048–1069 (GNAYLSLLQVATFKGWLQIMND) constitute an intramembrane region (pore-forming). Residue G1062 coordinates tetrodotoxin. W1063 contributes to the saxitoxin binding site. Topologically, residues 1070–1086 (AIDSREVHKQPIRETNI) are extracellular. A helical membrane pass occupies residues 1087-1108 (YMYLYFIFFIVFGSFFILKLFV). Over 1109-1171 (CILIDIFRQQ…LMYDISVNRK (63 aa)) the chain is Cytoplasmic. The interval 1133–1146 (QLIYRRAVMRTMSA) is linker region that may regulate channel inactivation. The helical transmembrane segment at 1172 to 1189 (FEYTMMILIILNVAVMAI) threads the bilayer. At 1190 to 1200 (DHYGQSMEFSE) the chain is on the extracellular side. Residues 1201–1219 (VLDYLNLIFIIIFFVECVI) form a helical membrane-spanning segment. At 1220–1231 (KVSGLRHHYFKD) the chain is on the cytoplasmic side. Residues 1232–1249 (PWNIIDFLYVVLAIAGLM) traverse the membrane as a helical segment. Topologically, residues 1250–1262 (LSDVIEKYFISPT) are extracellular. A helical transmembrane segment spans residues 1263–1279 (LLRILRILRVGRLLRYF). Residues 1280–1298 (QSARGMRLLLLALRKALRT) lie on the Cytoplasmic side of the membrane. Residues 1299–1316 (LFNVSFLLFVIMFVYAVF) traverse the membrane as a helical segment. Topologically, residues 1317 to 1338 (GMEFFMHIRDAGAIDDVYNFKT) are extracellular. The pore-forming intramembrane region spans 1339–1361 (FGQSIILLFQLATSAGWDGVYFA). Tetrodotoxin is bound by residues G1354 and D1356. Position 1356 (D1356) interacts with saxitoxin. Topologically, residues 1362-1387 (IANEEDCRAPDHELGYPGNCGSRALG) are extracellular. The cysteines at positions 1368 and 1381 are disulfide-linked. The chain crosses the membrane as a helical span at residues 1388–1410 (IAYLVSYLIITCLVVINMYAAVI). The Cytoplasmic segment spans residues 1411-1553 (LDYVLEVYED…NAWRKHKQQN (143 aa)).

It belongs to the sodium channel (TC 1.A.1.10) family. In terms of tissue distribution, detected in adult nerve cord, muscle, gut and mushroom-shaped accessory glands.

The protein localises to the cell membrane. Inhibited by the pore blockers saxitoxin and tetrodotoxin. Mediates the voltage-dependent sodium ion permeability of excitable membranes. The sequence is that of Sodium channel protein PaFPC1 from Periplaneta americana (American cockroach).